The following is a 78-amino-acid chain: Large ribosomal subunit protein bL28 (78 aa).

Residues 1–21 form a disordered region; sequence MSRVCQVTGKKPMVGNNRSHA.

This sequence belongs to the bacterial ribosomal protein bL28 family.

This is Large ribosomal subunit protein bL28 from Shewanella piezotolerans (strain WP3 / JCM 13877).